The chain runs to 481 residues: UDP-N-acetylmuramoyl-L-alanyl-D-glutamate--L-lysine ligase (481 aa).

Ser42 lines the UDP-N-acetyl-alpha-D-muramoyl-L-alanyl-D-glutamate pocket. ATP is bound at residue 118-124 (GTKGKTT). Residues Asn158, 160 to 161 (TT), Ser187, and Arg195 contribute to the UDP-N-acetyl-alpha-D-muramoyl-L-alanyl-D-glutamate site. N6-carboxylysine is present on Lys229. The short motif at 404-407 (DDPN) is the L-lysine recognition motif element.

The protein belongs to the MurCDEF family. MurE subfamily. In terms of processing, carboxylation is probably crucial for Mg(2+) binding and, consequently, for the gamma-phosphate positioning of ATP.

It localises to the cytoplasm. It carries out the reaction UDP-N-acetyl-alpha-D-muramoyl-L-alanyl-D-glutamate + L-lysine + ATP = UDP-N-acetyl-alpha-D-muramoyl-L-alanyl-gamma-D-glutamyl-L-lysine + ADP + phosphate + H(+). The protein operates within cell wall biogenesis; peptidoglycan biosynthesis. In terms of biological role, catalyzes the addition of L-lysine to the nucleotide precursor UDP-N-acetylmuramoyl-L-alanyl-D-glutamate (UMAG) in the biosynthesis of bacterial cell-wall peptidoglycan. The sequence is that of UDP-N-acetylmuramoyl-L-alanyl-D-glutamate--L-lysine ligase from Streptococcus thermophilus (strain ATCC BAA-491 / LMD-9).